Reading from the N-terminus, the 206-residue chain is Putative metal transport protein HI_1621 (206 aa).

Helical transmembrane passes span 6–26, 38–58, 72–92, 94–114, 136–156, and 165–185; these read GVLH…GIAV, LTAL…PVGI, FLGW…VIFF, FGGF…AVIA, IGAG…VLML, and LVWL…IISV.

It belongs to the CbiM family.

It is found in the cell membrane. Functionally, may be involved in metal transport. In Haemophilus influenzae (strain ATCC 51907 / DSM 11121 / KW20 / Rd), this protein is Putative metal transport protein HI_1621.